The chain runs to 273 residues: Epithelial sodium channel subunit beta (273 aa).

Topologically, residues 1–245 are extracellular; sequence NCYIFNWGQE…RSISESPTTN (245 aa). 5 cysteine pairs are disulfide-bonded: Cys92–Cys179, Cys117–Cys175, Cys121–Cys171, Cys130–Cys157, and Cys132–Cys146. The chain crosses the membrane as a helical span at residues 246–273; the sequence is VVWLLSNLGGQFGFWMGGSVLCIIEFGE.

It belongs to the amiloride-sensitive sodium channel (TC 1.A.6) family. SCNN1B subfamily. As to quaternary structure, component of the heterotrimeric epithelial sodium channel (ENaC) composed of an alpha/SCNN1A, a beta/SCNN1B and a gamma/SCNN1G subunit.

Its subcellular location is the apical cell membrane. The protein resides in the cytoplasmic vesicle membrane. The catalysed reaction is Na(+)(in) = Na(+)(out). Originally identified and characterized by its inhibition by the diuretic drug amiloride. In terms of biological role, this is one of the three pore-forming subunits of the heterotrimeric epithelial sodium channel (ENaC), a critical regulator of sodium balance and fluid homeostasis. ENaC operates in epithelial tissues, where it mediates the electrodiffusion of sodium ions from extracellular fluid through the apical membrane of cells, with water following osmotically. It plays a key role in maintaining sodium homeostasis through electrogenic sodium reabsorption in the kidneys. Additionally, ENaC is essential for airway surface liquid homeostasis, which is crucial for proper mucus clearance. The chain is Epithelial sodium channel subunit beta from Aquarana catesbeiana (American bullfrog).